Reading from the N-terminus, the 71-residue chain is Gas vesicle protein A (71 aa).

An alpha helix 1 region spans residues 12–22; it reads LAEVIDRILDK. Positions 26–34 are beta-strand 1; sequence IDAWARVSL. The segment at 35–37 is beta turn; the sequence is VGI. The tract at residues 38 to 46 is beta-strand 2; the sequence is ELLAIEARV. The tract at residues 51–70 is alpha helix 2; that stretch reads VETYLKYAEAVGLTQXAXXA.

Belongs to the gas vesicle GvpA family. As to quaternary structure, the gas vesicle shell is 2 nm thick and consists of a single layer of this protein. It forms helical ribs nearly perpendicular to the long axis of the vesicle.

It is found in the gas vesicle shell. In terms of biological role, gas vesicles are hollow, gas filled proteinaceous nanostructures found in some microorganisms. During planktonic growth they allow positioning of the organism at a favorable depth for light or nutrient acquisition. GvpA forms the protein shell. The polypeptide is Gas vesicle protein A (Microcystis sp. (strain BC 84/1)).